The primary structure comprises 161 residues: Putative 4-hydroxy-4-methyl-2-oxoglutarate aldolase (161 aa).

Residues 78–81 (GDVI) and Arg-100 contribute to the substrate site. Asp-101 serves as a coordination point for a divalent metal cation.

This sequence belongs to the class II aldolase/RraA-like family. As to quaternary structure, homotrimer. Requires a divalent metal cation as cofactor.

The enzyme catalyses 4-hydroxy-4-methyl-2-oxoglutarate = 2 pyruvate. The catalysed reaction is oxaloacetate + H(+) = pyruvate + CO2. Catalyzes the aldol cleavage of 4-hydroxy-4-methyl-2-oxoglutarate (HMG) into 2 molecules of pyruvate. Also contains a secondary oxaloacetate (OAA) decarboxylase activity due to the common pyruvate enolate transition state formed following C-C bond cleavage in the retro-aldol and decarboxylation reactions. This chain is Putative 4-hydroxy-4-methyl-2-oxoglutarate aldolase, found in Mycobacterium avium (strain 104).